Consider the following 150-residue polypeptide: Protein A151R (150 aa).

Belongs to the asfivirus A151R family. Monomer. Homodimer. Interacts with protein B119L. Interacts with membrane protein E248R. Requires Zn(2+) as cofactor.

Functionally, may participate in a redox cascade for the formation of disulfide bonds in viral proteins. In African swine fever virus (isolate Pig/Kenya/KEN-50/1950) (ASFV), this protein is Protein A151R.